Here is a 354-residue protein sequence, read N- to C-terminus: Uroporphyrinogen decarboxylase (354 aa).

Residues 27–31 (RQAGR), Asp77, Tyr153, Thr208, and His326 contribute to the substrate site.

This sequence belongs to the uroporphyrinogen decarboxylase family. Homodimer.

The protein localises to the cytoplasm. The catalysed reaction is uroporphyrinogen III + 4 H(+) = coproporphyrinogen III + 4 CO2. The protein operates within porphyrin-containing compound metabolism; protoporphyrin-IX biosynthesis; coproporphyrinogen-III from 5-aminolevulinate: step 4/4. Its function is as follows. Catalyzes the decarboxylation of four acetate groups of uroporphyrinogen-III to yield coproporphyrinogen-III. The protein is Uroporphyrinogen decarboxylase of Neisseria meningitidis serogroup C / serotype 2a (strain ATCC 700532 / DSM 15464 / FAM18).